The sequence spans 89 residues: Small ribosomal subunit protein uS19 (89 aa).

Belongs to the universal ribosomal protein uS19 family.

In terms of biological role, protein S19 forms a complex with S13 that binds strongly to the 16S ribosomal RNA. The sequence is that of Small ribosomal subunit protein uS19 from Xylella fastidiosa (strain M12).